The sequence spans 152 residues: Large ribosomal subunit protein uL13 (152 aa).

The protein belongs to the universal ribosomal protein uL13 family. In terms of assembly, part of the 50S ribosomal subunit.

This protein is one of the early assembly proteins of the 50S ribosomal subunit, although it is not seen to bind rRNA by itself. It is important during the early stages of 50S assembly. The chain is Large ribosomal subunit protein uL13 from Borreliella afzelii (strain PKo) (Borrelia afzelii).